Consider the following 152-residue polypeptide: Deoxyuridine 5'-triphosphate nucleotidohydrolase (152 aa).

Substrate contacts are provided by residues 71–73, Asn84, and 88–90; these read RSG and TID.

It belongs to the dUTPase family. Mg(2+) serves as cofactor.

The catalysed reaction is dUTP + H2O = dUMP + diphosphate + H(+). It participates in pyrimidine metabolism; dUMP biosynthesis; dUMP from dCTP (dUTP route): step 2/2. Its function is as follows. This enzyme is involved in nucleotide metabolism: it produces dUMP, the immediate precursor of thymidine nucleotides and it decreases the intracellular concentration of dUTP so that uracil cannot be incorporated into DNA. The sequence is that of Deoxyuridine 5'-triphosphate nucleotidohydrolase from Roseobacter denitrificans (strain ATCC 33942 / OCh 114) (Erythrobacter sp. (strain OCh 114)).